The primary structure comprises 424 residues: Tyrosine--tRNA ligase (424 aa).

Y37 serves as a coordination point for L-tyrosine. The 'HIGH' region motif lies at 42-51 (PTADSLHLGH). Residues Y175 and Q179 each coordinate L-tyrosine. Residues 235–239 (KFGKT) carry the 'KMSKS' region motif. K238 contacts ATP. Positions 357–414 (ADLQQALVNAELVPSRGQARTMISSNAVAINGEKQSDPEYAFTDADRLFGRYTLLRRG) constitute an S4 RNA-binding domain.

This sequence belongs to the class-I aminoacyl-tRNA synthetase family. TyrS type 1 subfamily. As to quaternary structure, homodimer.

It localises to the cytoplasm. It catalyses the reaction tRNA(Tyr) + L-tyrosine + ATP = L-tyrosyl-tRNA(Tyr) + AMP + diphosphate + H(+). Its function is as follows. Catalyzes the attachment of tyrosine to tRNA(Tyr) in a two-step reaction: tyrosine is first activated by ATP to form Tyr-AMP and then transferred to the acceptor end of tRNA(Tyr). This is Tyrosine--tRNA ligase from Yersinia enterocolitica serotype O:8 / biotype 1B (strain NCTC 13174 / 8081).